We begin with the raw amino-acid sequence, 1341 residues long: uncharacterized protein (1341 aa).

Positions 41 to 68 (CLLCRRRKQRCDHKLPSCTACLKAGIKC) form a DNA-binding region, zn(2)-C6 fungal-type. Composition is skewed to low complexity over residues 72-93 (SKYS…AGTV), 779-791 (SNSA…SNSN), 864-906 (SNSS…NDNN), 920-967 (NHNN…GNNS), and 1036-1050 (SPSK…SSHS). 4 disordered regions span residues 72–100 (SKYS…PHPV), 770–804 (ISSG…MPPA), 864–971 (SNSS…QYVR), and 1031–1116 (TMTN…NSNP). The span at 1057–1076 (MTQSPTPYPQTSNMLPQQHV) shows a compositional bias: polar residues. Low complexity predominate over residues 1078 to 1090 (RPLPQQQREQPQQ). The span at 1091–1116 (HITSPQRFSESNFTNQLNNGMINSNP) shows a compositional bias: polar residues. Serine 1143 carries the post-translational modification Phosphoserine. Positions 1220–1230 (SQEPSSLSMDK) are enriched in polar residues. Positions 1220 to 1240 (SQEPSSLSMDKQQQQHQQQNM) are disordered.

The protein resides in the nucleus. This is an uncharacterized protein from Saccharomyces cerevisiae (strain ATCC 204508 / S288c) (Baker's yeast).